The primary structure comprises 98 residues: Complement inhibitor RaCI1 (98 aa).

Residues 1–20 (MNAMLVLFIASALFISEHNT) form the signal peptide. 3 disulfide bridges follow: Cys33–Cys57, Cys38–Cys59, and Cys53–Cys74. The disordered stretch occupies residues 79-98 (TTKPPMAPGDNKDNKEEESN). Residues 88–98 (DNKDNKEEESN) are compositionally biased toward basic and acidic residues.

It belongs to the RaCI family. As to expression, expressed in salivary glands.

The protein localises to the secreted. Functionally, complement inhibitor. Prevents complement-mediated C5 activation by binding to C5. Binds C5 at a different binding site than the other tick complement inhibitors OmCI and CirpT1, and the drug eculizumab. Inhibits the complement in human and guinea pig but not in other species tested (rabbit, rat, mouse, and pig). This chain is Complement inhibitor RaCI1, found in Rhipicephalus appendiculatus (Brown ear tick).